Here is a 122-residue protein sequence, read N- to C-terminus: Small ribosomal subunit protein bS6 (122 aa).

Belongs to the bacterial ribosomal protein bS6 family.

Binds together with bS18 to 16S ribosomal RNA. The chain is Small ribosomal subunit protein bS6 from Trichlorobacter lovleyi (strain ATCC BAA-1151 / DSM 17278 / SZ) (Geobacter lovleyi).